Reading from the N-terminus, the 61-residue chain is Conotoxin Tx-D021 (61 aa).

An N-terminal signal peptide occupies residues 1-22 (MRCLPVFVILLLLIASTPSVDA). Residues 23-48 (RAKTRDDMSLASFHDDAKRILQILQD) constitute a propeptide that is removed on maturation. Cys60 bears the Cysteine amide mark.

It belongs to the conotoxin T superfamily. In terms of processing, contains 2 disulfide bonds that can be either 'C1-C3, C2-C4' or 'C1-C4, C2-C3', since these disulfide connectivities have been observed for conotoxins with cysteine framework V (for examples, see AC P0DQQ7 and AC P81755). In terms of tissue distribution, expressed by the venom duct.

The protein resides in the secreted. The protein is Conotoxin Tx-D021 of Conus textile (Cloth-of-gold cone).